The following is a 20-amino-acid chain: Unknown protein NF042 from 2D-PAGE (20 aa).

The protein is Unknown protein NF042 from 2D-PAGE of Naegleria fowleri (Brain eating amoeba).